Here is a 175-residue protein sequence, read N- to C-terminus: Adenine phosphoribosyltransferase (175 aa).

This sequence belongs to the purine/pyrimidine phosphoribosyltransferase family. As to quaternary structure, homodimer.

The protein localises to the cytoplasm. It catalyses the reaction AMP + diphosphate = 5-phospho-alpha-D-ribose 1-diphosphate + adenine. Its pathway is purine metabolism; AMP biosynthesis via salvage pathway; AMP from adenine: step 1/1. In terms of biological role, catalyzes a salvage reaction resulting in the formation of AMP, that is energically less costly than de novo synthesis. This Synechococcus sp. (strain JA-2-3B'a(2-13)) (Cyanobacteria bacterium Yellowstone B-Prime) protein is Adenine phosphoribosyltransferase.